A 141-amino-acid chain; its full sequence is Hemoglobin subunit alpha (141 aa).

One can recognise a Globin domain in the interval 1–141 (VLSSTDKSNV…VSTVLTSKYR (141 aa)). S3 bears the Phosphoserine mark. N6-succinyllysine is present on residues K7 and K11. N6-acetyllysine; alternate is present on K16. An N6-succinyllysine; alternate modification is found at K16. Phosphotyrosine is present on Y24. A Phosphoserine modification is found at S35. An N6-succinyllysine modification is found at K40. H58 is an O2 binding site. Heme b is bound at residue H87. S102 is modified (phosphoserine). T108 is modified (phosphothreonine). A phosphoserine mark is found at S124 and S131. A phosphothreonine mark is found at T134 and T137. At S138 the chain carries Phosphoserine.

This sequence belongs to the globin family. In terms of assembly, heterotetramer of two alpha chains and two beta chains. Red blood cells.

Its function is as follows. Involved in oxygen transport from the lung to the various peripheral tissues. Functionally, hemopressin acts as an antagonist peptide of the cannabinoid receptor CNR1. Hemopressin-binding efficiently blocks cannabinoid receptor CNR1 and subsequent signaling. This chain is Hemoglobin subunit alpha (HBA), found in Pteropus alecto (Black flying fox).